The following is a 238-amino-acid chain: Probable transcriptional regulatory protein CT_457 (238 aa).

Positions 1–21 are disordered; it reads MAGHSKWANTKHRKERADHKK. Over residues 9–21 the composition is skewed to basic residues; that stretch reads NTKHRKERADHKK.

The protein belongs to the TACO1 family.

The protein resides in the cytoplasm. This Chlamydia trachomatis serovar D (strain ATCC VR-885 / DSM 19411 / UW-3/Cx) protein is Probable transcriptional regulatory protein CT_457.